The primary structure comprises 1059 residues: Protein OPAQUE10 (1059 aa).

Repeat copies occupy residues serine 269 to cysteine 342, serine 343 to cysteine 416, serine 417 to cysteine 490, serine 491 to cysteine 564, phenylalanine 565 to cysteine 638, serine 639 to cysteine 712, and serine 713 to cysteine 786. A 7 X approximate repeats region spans residues serine 269–cysteine 786. A disordered region spans residues phenylalanine 511–serine 534. Over residues proline 515–serine 534 the composition is skewed to basic and acidic residues. 3 disordered regions span residues glutamine 732–serine 756, glutamate 856–threonine 875, and serine 889–glycine 998. The segment covering leucine 858–leucine 869 has biased composition (basic and acidic residues). Composition is skewed to polar residues over residues aspartate 907–glycine 924 and alanine 945–serine 958. The segment covering threonine 984–arginine 994 has biased composition (basic and acidic residues). Residues valine 1003 to leucine 1023 traverse the membrane as a helical segment.

In terms of assembly, homodimer. Interacts (via N-terminus) with FL1 (via C-terminus), HIP, 19 kDa alpha-zein (AC P06677), 22 kDa alpha-zein (AC O48966), 16 kDa gamma-zein (AC P08031) and 50 kDa gamma-zein (AC C0P381). Expressed in kernels.

The protein localises to the endoplasmic reticulum membrane. Its function is as follows. Cereal endosperm protein required for the ring-shaped distribution of 22 kDa alpha- and 16 kDa gamma-zeins in protein bodies. The protein is Protein OPAQUE10 of Zea mays (Maize).